The chain runs to 81 residues: Photosystem I iron-sulfur center (81 aa).

4Fe-4S ferredoxin-type domains are found at residues 2 to 31 (AHSV…MIPW) and 39 to 68 (IASA…VRVY). C11, C14, C17, C21, C48, C51, C54, and C58 together coordinate [4Fe-4S] cluster.

In terms of assembly, the eukaryotic PSI reaction center is composed of at least 11 subunits. [4Fe-4S] cluster is required as a cofactor.

The protein localises to the plastid. The protein resides in the chloroplast thylakoid membrane. It catalyses the reaction reduced [plastocyanin] + hnu + oxidized [2Fe-2S]-[ferredoxin] = oxidized [plastocyanin] + reduced [2Fe-2S]-[ferredoxin]. Functionally, apoprotein for the two 4Fe-4S centers FA and FB of photosystem I (PSI); essential for photochemical activity. FB is the terminal electron acceptor of PSI, donating electrons to ferredoxin. The C-terminus interacts with PsaA/B/D and helps assemble the protein into the PSI complex. Required for binding of PsaD and PsaE to PSI. PSI is a plastocyanin-ferredoxin oxidoreductase, converting photonic excitation into a charge separation, which transfers an electron from the donor P700 chlorophyll pair to the spectroscopically characterized acceptors A0, A1, FX, FA and FB in turn. The polypeptide is Photosystem I iron-sulfur center (Zygnema circumcarinatum (Green alga)).